The chain runs to 205 residues: Quinone-oxidoreductase QR2 (205 aa).

Positions 5 to 192 (VYIVYYSTYG…LKQAFHQGMY (188 aa)) constitute a Flavodoxin-like domain. FMN-binding positions include 11–15 (STYGH), 112–165 (IFFS…SPYG), and His136. Tyr13 is a binding site for NAD(+).

Belongs to the WrbA family. FMN is required as a cofactor.

The enzyme catalyses a quinone + NADH + H(+) = a quinol + NAD(+). The catalysed reaction is a quinone + NADPH + H(+) = a quinol + NADP(+). Inhibited by dicumarol. In terms of biological role, NAD(P)H:quinone oxidoreductase reducing quinones by a two-electron transfer mechanism. Can use either NADPH or NADH as electron donor. Can use menadione, 5-hydroxy-1,4-naphthoquinone (juglone) and 2,6-dimethoxy-p-benzoquinone (DMBQ) as substrates. Mitigates the toxicity of exogenous quinones in the rhizosphere. The polypeptide is Quinone-oxidoreductase QR2 (Triphysaria versicolor (Yellow owl's clover)).